A 359-amino-acid polypeptide reads, in one-letter code: Fructose-bisphosphate aldolase class 2 (359 aa).

Serine 62 contributes to the D-glyceraldehyde 3-phosphate binding site. Aspartate 110 functions as the Proton donor in the catalytic mechanism. Zn(2+)-binding residues include histidine 111, aspartate 145, glutamate 175, and histidine 227. Glycine 228 contacts dihydroxyacetone phosphate. Histidine 265 is a Zn(2+) binding site. Dihydroxyacetone phosphate contacts are provided by residues 266–268 (GGS) and 287–290 (NIDT).

The protein belongs to the class II fructose-bisphosphate aldolase family. Zn(2+) is required as a cofactor.

The enzyme catalyses beta-D-fructose 1,6-bisphosphate = D-glyceraldehyde 3-phosphate + dihydroxyacetone phosphate. It participates in carbohydrate degradation; glycolysis; D-glyceraldehyde 3-phosphate and glycerone phosphate from D-glucose: step 4/4. Its function is as follows. Catalyzes the aldol condensation of dihydroxyacetone phosphate (DHAP or glycerone-phosphate) with glyceraldehyde 3-phosphate (G3P) to form fructose 1,6-bisphosphate (FBP) in gluconeogenesis and the reverse reaction in glycolysis. The sequence is that of Fructose-bisphosphate aldolase class 2 (fbaA) from Buchnera aphidicola subsp. Baizongia pistaciae (strain Bp).